A 324-amino-acid chain; its full sequence is Major capsid protein (324 aa).

Positions 1–14 (MEQTQKLKLNLQHF) are excised as a propeptide.

The protein belongs to the HK97 phage major capsid protein family. As to quaternary structure, forms homopentamers and homohexamers in the mature capsid forming a 63 nm icosahedral head with T=7 architecture. The procapsid is made up of hexamers and pentamers of this subunit. There are seven subunits in the asymmetric unit in the T=7 procapsid. Found in the procapsid with the scaffold protein in a 2:1 capsid protein:scaffold protein molecular ratio. Post-translationally, the N-terminus is cleaved by ribosomal processing protease Prp.

Its subcellular location is the virion. Functionally, assembles to form an icosahedral capsid, as well as procapsid, with T=7 icosahedral symmetry. This is Major capsid protein from Staphylococcus aureus.